A 383-amino-acid polypeptide reads, in one-letter code: ATP phosphoribosyltransferase regulatory subunit (383 aa).

It belongs to the class-II aminoacyl-tRNA synthetase family. HisZ subfamily. As to quaternary structure, heteromultimer composed of HisG and HisZ subunits.

It is found in the cytoplasm. Its pathway is amino-acid biosynthesis; L-histidine biosynthesis; L-histidine from 5-phospho-alpha-D-ribose 1-diphosphate: step 1/9. Functionally, required for the first step of histidine biosynthesis. May allow the feedback regulation of ATP phosphoribosyltransferase activity by histidine. This chain is ATP phosphoribosyltransferase regulatory subunit, found in Cupriavidus necator (strain ATCC 17699 / DSM 428 / KCTC 22496 / NCIMB 10442 / H16 / Stanier 337) (Ralstonia eutropha).